The primary structure comprises 343 residues: Holliday junction branch migration complex subunit RuvB (343 aa).

The interval 1–186 is large ATPase domain (RuvB-L); that stretch reads MTEEFDIRQE…FGINLHLEYY (186 aa). Residues L25, R26, G67, K70, T71, T72, 133–135, R176, Y186, and R223 contribute to the ATP site; that span reads EDY. Position 71 (T71) interacts with Mg(2+). Positions 187–257 are small ATPAse domain (RuvB-S); the sequence is DVHTITGIVE…IACYALEALN (71 aa). The head domain (RuvB-H) stretch occupies residues 260-343; it reads RYGLDNVDHK…PRPHRPSLFD (84 aa). DNA is bound by residues R315 and R320.

Belongs to the RuvB family. Homohexamer. Forms an RuvA(8)-RuvB(12)-Holliday junction (HJ) complex. HJ DNA is sandwiched between 2 RuvA tetramers; dsDNA enters through RuvA and exits via RuvB. An RuvB hexamer assembles on each DNA strand where it exits the tetramer. Each RuvB hexamer is contacted by two RuvA subunits (via domain III) on 2 adjacent RuvB subunits; this complex drives branch migration. In the full resolvosome a probable DNA-RuvA(4)-RuvB(12)-RuvC(2) complex forms which resolves the HJ.

It localises to the cytoplasm. The catalysed reaction is ATP + H2O = ADP + phosphate + H(+). Its function is as follows. The RuvA-RuvB-RuvC complex processes Holliday junction (HJ) DNA during genetic recombination and DNA repair, while the RuvA-RuvB complex plays an important role in the rescue of blocked DNA replication forks via replication fork reversal (RFR). RuvA specifically binds to HJ cruciform DNA, conferring on it an open structure. The RuvB hexamer acts as an ATP-dependent pump, pulling dsDNA into and through the RuvAB complex. RuvB forms 2 homohexamers on either side of HJ DNA bound by 1 or 2 RuvA tetramers; 4 subunits per hexamer contact DNA at a time. Coordinated motions by a converter formed by DNA-disengaged RuvB subunits stimulates ATP hydrolysis and nucleotide exchange. Immobilization of the converter enables RuvB to convert the ATP-contained energy into a lever motion, pulling 2 nucleotides of DNA out of the RuvA tetramer per ATP hydrolyzed, thus driving DNA branch migration. The RuvB motors rotate together with the DNA substrate, which together with the progressing nucleotide cycle form the mechanistic basis for DNA recombination by continuous HJ branch migration. Branch migration allows RuvC to scan DNA until it finds its consensus sequence, where it cleaves and resolves cruciform DNA. The chain is Holliday junction branch migration complex subunit RuvB from Porphyromonas gingivalis (strain ATCC BAA-308 / W83).